The primary structure comprises 184 residues: Oligoribonuclease (184 aa).

In terms of domain architecture, Exonuclease spans 8–171; sequence LIWIDLEMTG…EDIRESVVEL (164 aa). Residue Tyr129 is part of the active site.

Belongs to the oligoribonuclease family.

Its subcellular location is the cytoplasm. 3'-to-5' exoribonuclease specific for small oligoribonucleotides. The chain is Oligoribonuclease from Buchnera aphidicola subsp. Acyrthosiphon pisum (strain APS) (Acyrthosiphon pisum symbiotic bacterium).